Consider the following 315-residue polypeptide: Phage tubulin-like protein (315 aa).

GTP-binding positions include 13-14 (GT) and 93-95 (GSG).

It belongs to the FtsZ family. PhuZ subfamily. In terms of assembly, homomultimer. Polymerizes in a strictly GTP-dependent manner.

Its subcellular location is the host cytoplasm. The enzyme catalyses GTP + H2O = GDP + phosphate + H(+). Its activity is regulated as follows. The non-hydrolyzable GTP analog GMPCPP stabilizes filaments, which never disassemble. Its function is as follows. A tubulin-like GTPase that forms filaments, which are required for positioning viral DNA and capsids in the middle of the host cell for optimal replication. The motor component of a partition system which pushes phage DNA (encased by protein gp105) to the center of the bacterial host cell. Also required for movement of phage capsids to the vicinity of the DNA and rotation of the encased viral DNA at midcell. Forms filaments during the lytic phase, which position phage DNA at the center of the bacterial host cell. Filaments have a three-stranded intertwined architecture and form a spindle-like cytoskeleton within the infected cell. Has GTPase activity. Filaments grow at the plus end and depolymerize at the minus end, a process called treadmilling, and switch from growing in a polar manner to catastrophic depolymerization, i.e. they display dynamic instability, like tubulin. In infected host cells the filament ends close to the cell pole are relatively stable, while the other end near the phage DNA is highly dynamic. Both capsid movement and DNA rotation probably require treadmilling. The chain is Phage tubulin-like protein from Pseudomonas aeruginosa (Pseudomonas aeruginosa phage PhiPA3).